The chain runs to 306 residues: Mitochondrial 2-oxoglutarate/malate carrier protein (306 aa).

Solcar repeat units follow at residues 7-95 (VPNV…LLER), 103-194 (LSFG…AKQA), and 203-292 (DGIF…MNAA). The next 6 membrane-spanning stretches (helical) occupy residues 9 to 38 (NVVK…NRMQ), 72 to 93 (SAGL…AFLL), 108 to 122 (KAVL…GSFV), 172 to 192 (PTVL…SQAK), 205 to 226 (IFCH…SMPV), and 268 to 286 (FTPY…FIIL).

This sequence belongs to the mitochondrial carrier (TC 2.A.29) family. In terms of assembly, interacts with ant-1.1 and ced-9. Ubiquitously expressed, but highly expressed in the anterior pharynx.

Its subcellular location is the mitochondrion. The protein resides in the mitochondrion inner membrane. The enzyme catalyses (S)-malate(in) + 2-oxoglutarate(out) = (S)-malate(out) + 2-oxoglutarate(in). It catalyses the reaction malonate(in) + 2-oxoglutarate(out) = malonate(out) + 2-oxoglutarate(in). It carries out the reaction succinate(in) + 2-oxoglutarate(out) = succinate(out) + 2-oxoglutarate(in). The catalysed reaction is maleate(in) + 2-oxoglutarate(out) = maleate(out) + 2-oxoglutarate(in). The enzyme catalyses oxaloacetate(in) + 2-oxoglutarate(out) = oxaloacetate(out) + 2-oxoglutarate(in). Functionally, catalyzes the transport of 2-oxoglutarate (alpha-oxoglutarate) across the inner mitochondrial membrane in an electroneutral exchange for malate. Can also exchange 2-oxoglutarate for other dicarboxylic acids such as malonate, succinate, maleate and oxaloacetate, although with lower affinity. Contributes to several metabolic processes, including the malate-aspartate shuttle, the oxoglutarate/isocitrate shuttle, in gluconeogenesis from lactate, and in nitrogen metabolism. Maintains mitochondrial fusion and fission events, and the organization and morphology of cristae. Regulator of apoptosis, insulin secretion and germline proliferation. Furthermore, plays a role in the oxidative stress response regulating endogenous levels of reactive oxygen species (ROS). Involved in the regulation of lin-35/Rb-mediated apoptosis in the germline. This Caenorhabditis elegans protein is Mitochondrial 2-oxoglutarate/malate carrier protein.